Reading from the N-terminus, the 120-residue chain is Prophage bactoprenol-linked glucose translocase homolog (120 aa).

The Cytoplasmic segment spans residues 1–9; sequence MLKLFAKYT. A helical transmembrane segment spans residues 10 to 30; the sequence is SIGVLNTLIHWVVFGVCIYVA. Topologically, residues 31 to 33 are periplasmic; the sequence is HTN. The helical transmembrane segment at 34–54 threads the bilayer; it reads QALANFAGFVVAVSFSFFANA. Topologically, residues 55–64 are cytoplasmic; it reads KFTFKASTTT. The chain crosses the membrane as a helical span at residues 65–85; it reads MRYMLYVGFMGTLSATVGWAA. The Periplasmic segment spans residues 86-88; sequence DRC. A helical membrane pass occupies residues 89 to 109; sequence ALPPMITLVTFSAISLVCGFV. At 110 to 120 the chain is on the cytoplasmic side; that stretch reads YSKFIVFRDAK.

Belongs to the GtrA family.

The protein resides in the cell inner membrane. In terms of biological role, involved in O antigen modification. Involved in the translocation of bactoprenol-linked glucose across the cytoplasmic membrane. This chain is Prophage bactoprenol-linked glucose translocase homolog (yfdG), found in Escherichia coli (strain K12).